A 306-amino-acid chain; its full sequence is Methionyl-tRNA formyltransferase (306 aa).

105–108 (SLLP) contributes to the (6S)-5,6,7,8-tetrahydrofolate binding site.

Belongs to the Fmt family.

The catalysed reaction is L-methionyl-tRNA(fMet) + (6R)-10-formyltetrahydrofolate = N-formyl-L-methionyl-tRNA(fMet) + (6S)-5,6,7,8-tetrahydrofolate + H(+). Functionally, attaches a formyl group to the free amino group of methionyl-tRNA(fMet). The formyl group appears to play a dual role in the initiator identity of N-formylmethionyl-tRNA by promoting its recognition by IF2 and preventing the misappropriation of this tRNA by the elongation apparatus. The polypeptide is Methionyl-tRNA formyltransferase (Rubrobacter xylanophilus (strain DSM 9941 / JCM 11954 / NBRC 16129 / PRD-1)).